The chain runs to 213 residues: Thiamine-phosphate synthase (213 aa).

Residues 38 to 42 (QLREK) and D70 contribute to the 4-amino-2-methyl-5-(diphosphooxymethyl)pyrimidine site. Mg(2+) is bound by residues D71 and E90. Residue S109 coordinates 4-amino-2-methyl-5-(diphosphooxymethyl)pyrimidine. 135–137 (TQT) serves as a coordination point for 2-[(2R,5Z)-2-carboxy-4-methylthiazol-5(2H)-ylidene]ethyl phosphate. 4-amino-2-methyl-5-(diphosphooxymethyl)pyrimidine is bound at residue K138. 2-[(2R,5Z)-2-carboxy-4-methylthiazol-5(2H)-ylidene]ethyl phosphate-binding positions include G165 and 185 to 186 (VS).

This sequence belongs to the thiamine-phosphate synthase family. Mg(2+) serves as cofactor.

It carries out the reaction 2-[(2R,5Z)-2-carboxy-4-methylthiazol-5(2H)-ylidene]ethyl phosphate + 4-amino-2-methyl-5-(diphosphooxymethyl)pyrimidine + 2 H(+) = thiamine phosphate + CO2 + diphosphate. The catalysed reaction is 2-(2-carboxy-4-methylthiazol-5-yl)ethyl phosphate + 4-amino-2-methyl-5-(diphosphooxymethyl)pyrimidine + 2 H(+) = thiamine phosphate + CO2 + diphosphate. It catalyses the reaction 4-methyl-5-(2-phosphooxyethyl)-thiazole + 4-amino-2-methyl-5-(diphosphooxymethyl)pyrimidine + H(+) = thiamine phosphate + diphosphate. The protein operates within cofactor biosynthesis; thiamine diphosphate biosynthesis; thiamine phosphate from 4-amino-2-methyl-5-diphosphomethylpyrimidine and 4-methyl-5-(2-phosphoethyl)-thiazole: step 1/1. Its function is as follows. Condenses 4-methyl-5-(beta-hydroxyethyl)thiazole monophosphate (THZ-P) and 2-methyl-4-amino-5-hydroxymethyl pyrimidine pyrophosphate (HMP-PP) to form thiamine monophosphate (TMP). This chain is Thiamine-phosphate synthase, found in Lacticaseibacillus paracasei (strain ATCC 334 / BCRC 17002 / CCUG 31169 / CIP 107868 / KCTC 3260 / NRRL B-441) (Lactobacillus paracasei).